Reading from the N-terminus, the 475-residue chain is Ribulose bisphosphate carboxylase large chain (475 aa).

Positions 1 to 2 are excised as a propeptide; the sequence is MS. Residue P3 is modified to N-acetylproline. At K14 the chain carries N6,N6,N6-trimethyllysine. 2 residues coordinate substrate: N123 and T173. Residue K175 is the Proton acceptor of the active site. K177 lines the substrate pocket. Residues K201, D203, and E204 each coordinate Mg(2+). K201 is subject to N6-carboxylysine. H294 functions as the Proton acceptor in the catalytic mechanism. Substrate is bound by residues R295, H327, and S379.

This sequence belongs to the RuBisCO large chain family. Type I subfamily. Heterohexadecamer of 8 large chains and 8 small chains; disulfide-linked. The disulfide link is formed within the large subunit homodimers. Mg(2+) is required as a cofactor. Post-translationally, the disulfide bond which can form in the large chain dimeric partners within the hexadecamer appears to be associated with oxidative stress and protein turnover.

It is found in the plastid. Its subcellular location is the chloroplast. It catalyses the reaction 2 (2R)-3-phosphoglycerate + 2 H(+) = D-ribulose 1,5-bisphosphate + CO2 + H2O. It carries out the reaction D-ribulose 1,5-bisphosphate + O2 = 2-phosphoglycolate + (2R)-3-phosphoglycerate + 2 H(+). Functionally, ruBisCO catalyzes two reactions: the carboxylation of D-ribulose 1,5-bisphosphate, the primary event in carbon dioxide fixation, as well as the oxidative fragmentation of the pentose substrate in the photorespiration process. Both reactions occur simultaneously and in competition at the same active site. The polypeptide is Ribulose bisphosphate carboxylase large chain (Piper cenocladum (Ant piper)).